We begin with the raw amino-acid sequence, 662 residues long: MEAITIEIIIIILTISYPILVAPQLLYNYPFNCKKGPKMTLDGLTCPLDFNTFNLDSKDNMEAGTMCRPNPLSKDIEDGFLCYKDTWVTTCEETWYFSKTVKNHIIHEHITKDECFEALATYKLGKHVEPFFPAPSCYWSATNEERATFVNIQPHGVLLDPYSGKIKDPLIDSDNCDNDFCVTRSHQTHWLRNRKPDIMERCNNETWECHPIKIYYGWVSKKKNQETSTTFNYVQTGLVIESQYIGHVLMADLCIMTFCNRDGYLFPDGSWWEIKYSLYHAFTKDHTVLNNAHKCGDRTHGDHLTEFQRDKKVGYEDLEINLEGLEMRQKSRSINMMCLNRLAEIRNTHHINVLDMSYLTPKHPGRGLAYYFSQDQKNSSKYHVKVLDCDYKLIHIHDADIKGFVNITKYPEPNVTILGLKDNLTFADLGISRCQDLTPLNGSRNISCEESSGPLHSDDSRLSNGKRFWTRHSFQGANFHEHPGVRIGVNGITYDIRKQILRFPSTSNLLWDLPSYYSTKHRVHFFQHPTKHEIRKNFTGSDSRDIDVLDDLINRHINRTDFPTRIRNWIGNIEDKVEHFFSNVGGTIKTIISLVLFVIGTLISIKVWKKCKRHPQKTKKVAQLKLNDYEKTYNQRDTSNNNNDDLYETIENGGTVYSPFHV.

An N-terminal signal peptide occupies residues 1–16; sequence MEAITIEIIIIILTIS. Over 17–579 the chain is Virion surface; the sequence is YPILVAPQLL…IGNIEDKVEH (563 aa). 4 cysteine pairs are disulfide-bonded: cysteine 46–cysteine 338, cysteine 82–cysteine 115, cysteine 91–cysteine 137, and cysteine 202–cysteine 259. Residues 580 to 605 form a helical membrane-spanning segment; the sequence is FFSNVGGTIKTIISLVLFVIGTLISI. At 606–662 the chain is on the intravirion side; sequence KVWKKCKRHPQKTKKVAQLKLNDYEKTYNQRDTSNNNNDDLYETIENGGTVYSPFHV.

The protein belongs to the vesiculovirus glycoprotein family. Homotrimer. Glycosylated by host.

Its subcellular location is the virion membrane. The protein resides in the host membrane. Functionally, attaches the virus to host receptors, inducing clathrin-dependent endocytosis of the virion. In terms of biological role, in the endosome, the acidic pH induces conformational changes in the glycoprotein trimer, which trigger fusion between virus and endosomal membrane. The chain is Glycoprotein (G) from Bos taurus (Bovine).